Here is a 390-residue protein sequence, read N- to C-terminus: NADH-quinone oxidoreductase subunit D (390 aa).

It belongs to the complex I 49 kDa subunit family. NDH-1 is composed of 14 different subunits. Subunits NuoB, C, D, E, F, and G constitute the peripheral sector of the complex.

The protein resides in the cell inner membrane. It catalyses the reaction a quinone + NADH + 5 H(+)(in) = a quinol + NAD(+) + 4 H(+)(out). In terms of biological role, NDH-1 shuttles electrons from NADH, via FMN and iron-sulfur (Fe-S) centers, to quinones in the respiratory chain. The immediate electron acceptor for the enzyme in this species is believed to be ubiquinone. Couples the redox reaction to proton translocation (for every two electrons transferred, four hydrogen ions are translocated across the cytoplasmic membrane), and thus conserves the redox energy in a proton gradient. This chain is NADH-quinone oxidoreductase subunit D, found in Trichlorobacter lovleyi (strain ATCC BAA-1151 / DSM 17278 / SZ) (Geobacter lovleyi).